Consider the following 309-residue polypeptide: UDP-URONIC ACID TRANSPORTER 1 (309 aa).

Helical transmembrane passes span 9–29 (TLFISTLIISWYSSNIGVLLL), 43–63 (IFLTMCHMSACAILSYISIVF), 78–98 (FLKVATLSIVFCASVVGGNIS), 104–124 (VSFNQAVGATTPFFTALFAYL), 131–151 (AWVTYGALVPVVAGVVIASGG), 152–172 (EPGFHWFGFIMCISATAARAF), 193–213 (LMLYMSPIAVIALLPVTLFME), 231–251 (WILLLVNSVMAYSANLLNFLV), 256–278 (SALTLQVLGNAKGAVAVVISILI), and 283–302 (VTVMGIGGYSITVLGVVAYG).

It belongs to the TPT transporter family. TPT (TC 2.A.7.9) subfamily. Ubiquitous.

It is found in the golgi apparatus membrane. Its function is as follows. UDP-glucuronic acid transporter that modulates the polysaccharide composition of seed mucilage. Transports UDP-glucuronic acid (UDP-GlcA) and UDP-galacturonic acid (UDP-GalA) in vitro. The protein is UDP-URONIC ACID TRANSPORTER 1 of Arabidopsis thaliana (Mouse-ear cress).